The following is a 152-amino-acid chain: Nucleoside diphosphate kinase A (152 aa).

ATP contacts are provided by K12, F60, R88, and T94. K100 is covalently cross-linked (Glycyl lysine isopeptide (Lys-Gly) (interchain with G-Cter in ubiquitin)). Residues R105 and N115 each coordinate ATP. Catalysis depends on H118, which acts as the Pros-phosphohistidine intermediate. Residues S120, S122, and S125 each carry the phosphoserine modification.

Belongs to the NDK family. In terms of assembly, hexamer of two different chains: An and B (A6, A5B, A4B2, A3B3, A2B4, AB5, B6). Interacts with PRUNE1. Component of the SET complex, composed of at least ANP32A, APEX1, HMGB2, NME1, SET and TREX1. Within this complex, interacts directly with SET. Also interacts with TREX1, but only following translocation to the nucleus. It depends on Mg(2+) as a cofactor.

It localises to the cytoplasm. The protein localises to the nucleus. The catalysed reaction is a 2'-deoxyribonucleoside 5'-diphosphate + ATP = a 2'-deoxyribonucleoside 5'-triphosphate + ADP. It catalyses the reaction a ribonucleoside 5'-diphosphate + ATP = a ribonucleoside 5'-triphosphate + ADP. With respect to regulation, autophosphorylation at His-118 increases serine/threonine protein kinase activity of the enzyme. Interaction with the SET complex inhibits exonuclease activity. Its function is as follows. Major role in the synthesis of nucleoside triphosphates other than ATP. The ATP gamma phosphate is transferred to the NDP beta phosphate via a ping-pong mechanism, using a phosphorylated active-site intermediate. Possesses nucleoside-diphosphate kinase, serine/threonine-specific protein kinase, geranyl and farnesyl pyrophosphate kinase, histidine protein kinase and 3'-5' exonuclease activities. Involved in cell proliferation, differentiation and development, signal transduction, G protein-coupled receptor endocytosis, and gene expression. Required for neural development including neural patterning and cell fate determination. During GZMA-mediated cell death, works in concert with TREX1. NME1 nicks one strand of DNA and TREX1 removes bases from the free 3' end to enhance DNA damage and prevent DNA end reannealing and rapid repair. The polypeptide is Nucleoside diphosphate kinase A (NME1) (Canis lupus familiaris (Dog)).